We begin with the raw amino-acid sequence, 177 residues long: MSEFATVARPYAKAAFDFAVEKQSLEQWQNMLAFTAEVTRNEQVGELLSGSLASETLANTFIAICGEQVDEHAQNFIRVMAENGRLLALPEVLQQFIQLRASLESTVDVEVISATELREQQLAKISVAMEKRLSRKVKLNCKIDKSVIAGVVVRAGDLVIDGSIRGRLDRLTDVLQS.

This sequence belongs to the ATPase delta chain family. F-type ATPases have 2 components, F(1) - the catalytic core - and F(0) - the membrane proton channel. F(1) has five subunits: alpha(3), beta(3), gamma(1), delta(1), epsilon(1). F(0) has three main subunits: a(1), b(2) and c(10-14). The alpha and beta chains form an alternating ring which encloses part of the gamma chain. F(1) is attached to F(0) by a central stalk formed by the gamma and epsilon chains, while a peripheral stalk is formed by the delta and b chains.

It is found in the cell inner membrane. F(1)F(0) ATP synthase produces ATP from ADP in the presence of a proton or sodium gradient. F-type ATPases consist of two structural domains, F(1) containing the extramembraneous catalytic core and F(0) containing the membrane proton channel, linked together by a central stalk and a peripheral stalk. During catalysis, ATP synthesis in the catalytic domain of F(1) is coupled via a rotary mechanism of the central stalk subunits to proton translocation. Its function is as follows. This protein is part of the stalk that links CF(0) to CF(1). It either transmits conformational changes from CF(0) to CF(1) or is implicated in proton conduction. The sequence is that of ATP synthase subunit delta from Photorhabdus laumondii subsp. laumondii (strain DSM 15139 / CIP 105565 / TT01) (Photorhabdus luminescens subsp. laumondii).